The chain runs to 1167 residues: ATP-dependent helicase/deoxyribonuclease subunit B (1167 aa).

Positions 1 to 359 (MSLRFLLGRS…IRQTEAYRDL (359 aa)) constitute a UvrD-like helicase ATP-binding domain. 8-15 (GRSGSGKT) serves as a coordination point for ATP. Residues 282–588 (ANRRHEDRAL…EFSLVPPAMD (307 aa)) form the UvrD-like helicase C-terminal domain. [4Fe-4S] cluster-binding residues include cysteine 804, cysteine 1126, cysteine 1129, and cysteine 1135.

It belongs to the helicase family. AddB/RexB type 1 subfamily. Heterodimer of AddA and AddB. Requires Mg(2+) as cofactor. It depends on [4Fe-4S] cluster as a cofactor.

Its function is as follows. The heterodimer acts as both an ATP-dependent DNA helicase and an ATP-dependent, dual-direction single-stranded exonuclease. Recognizes the chi site generating a DNA molecule suitable for the initiation of homologous recombination. The AddB subunit has 5' -&gt; 3' nuclease activity but not helicase activity. The chain is ATP-dependent helicase/deoxyribonuclease subunit B from Geobacillus kaustophilus (strain HTA426).